The following is a 1018-amino-acid chain: 2-oxoglutarate dehydrogenase-like, mitochondrial (1018 aa).

Residues His138, Asp151, and Asp153 each contribute to the Ca(2+) site. Arg307, Asp406, Asn439, Ile441, and Gln671 together coordinate thiamine diphosphate. Mg(2+) is bound by residues Asp406, Asn439, and Ile441.

Belongs to the alpha-ketoglutarate dehydrogenase family. The OGDHC complex comprises multiple copies of three catalytic enzyme components, the 2-oxoglutarate dehydrogenase (OGDH/E1), the dihydrolipoamide dehydrogenase (DLST/E2) and the dihydrolipoamide dehydrogenase (DLD/E3). OGDHL/E1-like isoenzyme may replace OGDH in the OGDHC complex in the brain. Thiamine diphosphate serves as cofactor. Requires Mg(2+) as cofactor.

It localises to the mitochondrion matrix. It carries out the reaction N(6)-[(R)-lipoyl]-L-lysyl-[protein] + 2-oxoglutarate + H(+) = N(6)-[(R)-S(8)-succinyldihydrolipoyl]-L-lysyl-[protein] + CO2. Functionally, 2-oxoglutarate dehydrogenase (E1-like) component of the 2-oxoglutarate dehydrogenase multienzyme complex (OGDHC) which mediates the decarboxylation of alpha-ketoglutarate in the tricarboxylic acid cycle. The OGDHC complex catalyzes the overall conversion of 2-oxoglutarate to succinyl-CoA and CO(2) while reducing NAD(+) to NADH. The OGDHC complex is mainly active in the mitochondrion. Involved in the inhibition of cell proliferation and in apoptosis. This chain is 2-oxoglutarate dehydrogenase-like, mitochondrial (ogdhl), found in Xenopus laevis (African clawed frog).